The primary structure comprises 125 residues: Inner membrane protein YbjM (125 aa).

At 1 to 6 (MKHKQR) the chain is on the cytoplasmic side. The helical transmembrane segment at 7 to 27 (WAGAICCFVLFIVVCLFLATH) threads the bilayer. Residues 28-34 (MKGAFRA) lie on the Periplasmic side of the membrane. The helical transmembrane segment at 35-55 (AGHPEIGLLFFILPGAVASFF) threads the bilayer. Residues 56 to 64 (SQRREVLKP) lie on the Cytoplasmic side of the membrane. A helical transmembrane segment spans residues 65–85 (LFGAMLAAPCSMLIMRLFFSP). At 86–92 (TRSFWQE) the chain is on the periplasmic side. The chain crosses the membrane as a helical span at residues 93–113 (LAWLLSAVFWCALGALCFLFI). At 114–125 (SSLFKPQHRKNQ) the chain is on the cytoplasmic side.

It is found in the cell inner membrane. This Escherichia coli O157:H7 protein is Inner membrane protein YbjM (ybjM).